The chain runs to 331 residues: DSC E3 ubiquitin ligase complex subunit D (331 aa).

An N-linked (GlcNAc...) asparagine glycan is attached at N26. The next 3 helical transmembrane spans lie at 63-83 (ILIYCELSALYYMDCSVILFA), 107-127 (PFIGAIFVSNIFCMIFHNFFT), and 159-179 (LFLLDFLVLILDLVMLGLIVE). The segment covering 197–214 (VQDHDSEERGVHRTRPES) has biased composition (basic and acidic residues). A disordered region spans residues 197-225 (VQDHDSEERGVHRTRPESRSSVVGAELDE).

Component of the DSC E3 ubiquitin ligase complex composed of dscA, dscB, dscC and dscD.

It is found in the endoplasmic reticulum membrane. It functions in the pathway protein modification; protein ubiquitination. Component of the DSC E3 ubiquitin ligase complex which is required for the srbA transcriptional activator proteolytic cleavage to release the soluble transcription factor from the membrane in low oxygen or sterol conditions. Required for growth during hypoxia and triazole drug susceptibility, as well as for virulence in a murine model of invasive pulmonary aspergillosis (IPA). In Aspergillus fumigatus (strain CBS 144.89 / FGSC A1163 / CEA10) (Neosartorya fumigata), this protein is DSC E3 ubiquitin ligase complex subunit D.